We begin with the raw amino-acid sequence, 214 residues long: Cytochrome c biogenesis ATP-binding export protein CcmA (214 aa).

One can recognise an ABC transporter domain in the interval 4–214; sequence LAVDQLTVSR…FDHGFDGAFL (211 aa). 36-43 serves as a coordination point for ATP; it reads GPNGIGKT.

This sequence belongs to the ABC transporter superfamily. CcmA exporter (TC 3.A.1.107) family. The complex is composed of two ATP-binding proteins (CcmA) and two transmembrane proteins (CcmB).

Its subcellular location is the cell inner membrane. It catalyses the reaction heme b(in) + ATP + H2O = heme b(out) + ADP + phosphate + H(+). Part of the ABC transporter complex CcmAB involved in the biogenesis of c-type cytochromes; once thought to export heme, this seems not to be the case, but its exact role is uncertain. Responsible for energy coupling to the transport system. The chain is Cytochrome c biogenesis ATP-binding export protein CcmA from Rhodobacter capsulatus (strain ATCC BAA-309 / NBRC 16581 / SB1003).